Reading from the N-terminus, the 141-residue chain is MFACSKFVSTPSLVKSTSQLLSRPLSAVVLKRPEILTDESLSSLAVSCPLTSLVSSRSFQTSAISRDIDTAAKFIGAGAATVGVAGSGAGIGTVFGSLIIGYARNPSLKQQLFSYAILGFALSEAMGLFCLMVAFLILFAM.

The N-terminal 66 residues, 1–66 (MFACSKFVST…RSFQTSAISR (66 aa)), are a transit peptide targeting the mitochondrion. The helical transmembrane segment at 82–102 (VGVAGSGAGIGTVFGSLIIGY) threads the bilayer. Position 109 is an N6,N6,N6-trimethyllysine (Lys-109). Residues 117-137 (ILGFALSEAMGLFCLMVAFLI) form a helical membrane-spanning segment.

The protein belongs to the ATPase C chain family. In terms of assembly, F-type ATPases have 2 components, CF(1) - the catalytic core - and CF(0) - the membrane proton channel. CF(1) has five subunits: alpha(3), beta(3), gamma(1), delta(1), epsilon(1). CF(0) has three main subunits: a, b and c. Interacts with DNAJC30; interaction is direct. In terms of processing, trimethylated by ATPSCKMT at Lys-109. Methylation is required for proper incorporation of the C subunit into the ATP synthase complex and mitochondrial respiration.

It is found in the mitochondrion membrane. Its function is as follows. Mitochondrial membrane ATP synthase (F(1)F(0) ATP synthase or Complex V) produces ATP from ADP in the presence of a proton gradient across the membrane which is generated by electron transport complexes of the respiratory chain. F-type ATPases consist of two structural domains, F(1) - containing the extramembraneous catalytic core and F(0) - containing the membrane proton channel, linked together by a central stalk and a peripheral stalk. During catalysis, ATP synthesis in the catalytic domain of F(1) is coupled via a rotary mechanism of the central stalk subunits to proton translocation. Part of the complex F(0) domain. A homomeric c-ring of probably 10 subunits is part of the complex rotary element. This is ATP synthase F(0) complex subunit C2, mitochondrial from Homo sapiens (Human).